The sequence spans 119 residues: MDKIVLEGCRFYGYHGAFKEEQTLGQIFLVDLELSVDLQAASLSDQLTDTVHYGIVFDSVRQLVEGGKFILIERLAGAICEQLFNEFPPIEAIKVAIKKENPPIAGHYKAVGIELERQR.

Substrate is bound by residues E21, Y53, and 72–73; that span reads IE. K99 acts as the Proton donor/acceptor in catalysis.

Belongs to the DHNA family.

The enzyme catalyses 7,8-dihydroneopterin = 6-hydroxymethyl-7,8-dihydropterin + glycolaldehyde. It functions in the pathway cofactor biosynthesis; tetrahydrofolate biosynthesis; 2-amino-4-hydroxy-6-hydroxymethyl-7,8-dihydropteridine diphosphate from 7,8-dihydroneopterin triphosphate: step 3/4. Its function is as follows. Catalyzes the conversion of 7,8-dihydroneopterin to 6-hydroxymethyl-7,8-dihydropterin. The sequence is that of Dihydroneopterin aldolase (folB) from Streptococcus pyogenes serotype M3 (strain ATCC BAA-595 / MGAS315).